A 44-amino-acid polypeptide reads, in one-letter code: Opistoporin-2 (44 aa).

In terms of tissue distribution, expressed by the venom gland.

The protein resides in the secreted. Its subcellular location is the target cell membrane. In terms of biological role, at high concentrations, acts as a pore former in cellular membranes and causes the leakage of the cells. At submicromolar concentrations, degranulates granulocytes and has a weak hemolytic activity against human erythrocytes. Also strongly inhibits the production of superoxide anions. Has a strong antibacterial activity against Gram-negative bacteria but is less active against Gram-positive bacteria. Also has antifungal activity. The protein is Opistoporin-2 of Opistophthalmus carinatus (African yellow leg scorpion).